Here is a 147-residue protein sequence, read N- to C-terminus: UPF0306 protein YhbP (147 aa).

This sequence belongs to the UPF0306 family.

The protein is UPF0306 protein YhbP of Shigella dysenteriae serotype 1 (strain Sd197).